Reading from the N-terminus, the 385-residue chain is Methionine aminopeptidase 1 (385 aa).

The C6H2-type zinc-finger motif lies at 6–59 (SRVCETEGCSSEAKLQCPTCIKLGIQGSYFCSQECFKGSWATHKLLHKKAKDDK). The Zn(2+) site is built by C9, C14, C22, C25, C36, C40, H48, and H52. An a protein-binding site is contributed by H203. Positions 220, 231, and 294 each coordinate Zn(2+). Residue H301 participates in a protein binding. Zn(2+)-binding residues include E327 and E358.

Belongs to the peptidase M24A family. Methionine aminopeptidase type 1 subfamily. In terms of assembly, associates with the 60S ribosomal subunit of the 80S translational complex. It depends on Zn(2+) as a cofactor. Requires Co(2+) as cofactor. Mn(2+) is required as a cofactor. Fe(2+) serves as cofactor.

The protein resides in the cytoplasm. It carries out the reaction Release of N-terminal amino acids, preferentially methionine, from peptides and arylamides.. Its function is as follows. Cotranslationally removes the N-terminal methionine from nascent proteins. The N-terminal methionine is often cleaved when the second residue in the primary sequence is small and uncharged (Met-Ala-, Cys, Gly, Pro, Ser, Thr, or Val). The chain is Methionine aminopeptidase 1 (metap1) from Xenopus laevis (African clawed frog).